Reading from the N-terminus, the 427-residue chain is Peptidyl-prolyl cis-trans isomerase sig-7 (427 aa).

In terms of domain architecture, PPIase cyclophilin-type spans 6–161; sequence ETTLGDLIID…KDIRISHTIV (156 aa). A coiled-coil region spans residues 195-227; sequence DEKEDEDEGKTAEEIAEELQQREMAEQAQILEM. The region spanning 241–319 is the RRM domain; it reads NVLFVCKLNP…RRIHVDFSQS (79 aa). Residues 322-334 are compositionally biased toward polar residues; sequence QNYKYKPKSQQQE. The interval 322-427 is disordered; it reads QNYKYKPKSQ…RSPDRRRDRR (106 aa). Over residues 351 to 370 the composition is skewed to basic residues; the sequence is SHQRSPSPRRRRSPSPKKDK. Over residues 384-427 the composition is skewed to basic and acidic residues; it reads SSDNHRDRDRSYRDNNRDRRDNHRDSDRDRRRHDRSPDRRRDRR.

The protein belongs to the cyclophilin-type PPIase family. PPIL4 subfamily. Interacts with ama-1, the catalytic subunit of the RNA polymerase II (RNA pol II) complex. In terms of tissue distribution, ubiquitous.

It is found in the nucleus. It localises to the nucleoplasm. The protein resides in the chromosome. The enzyme catalyses [protein]-peptidylproline (omega=180) = [protein]-peptidylproline (omega=0). In terms of biological role, probable PPIase that accelerates the folding of proteins. It catalyzes the cis-trans isomerization of proline imidic peptide bonds in oligopeptides. Involved in RNA polymerase II (RNA pol II)-mediated transcription elongation, and in primary transcript splicing, including co-transcriptional trans-splicing, in association with the catalytic subunit of the RNA pol II complex ama-1. Also plays a role in the regulation of elongation-dependent phosphorylation of ama-1 to control transcription. Involved in the transcription of several genes during embryogenesis and in particular, of genes related to developmental processes such as gastrulation, and also regulates transcription in germ cells from embryogenesis to adulthood. The sequence is that of Peptidyl-prolyl cis-trans isomerase sig-7 from Caenorhabditis elegans.